Reading from the N-terminus, the 179-residue chain is Large ribosomal subunit protein uL5 (179 aa).

It belongs to the universal ribosomal protein uL5 family. As to quaternary structure, part of the 50S ribosomal subunit; part of the 5S rRNA/L5/L18/L25 subcomplex. Contacts the 5S rRNA and the P site tRNA. Forms a bridge to the 30S subunit in the 70S ribosome.

This is one of the proteins that bind and probably mediate the attachment of the 5S RNA into the large ribosomal subunit, where it forms part of the central protuberance. In the 70S ribosome it contacts protein S13 of the 30S subunit (bridge B1b), connecting the 2 subunits; this bridge is implicated in subunit movement. Contacts the P site tRNA; the 5S rRNA and some of its associated proteins might help stabilize positioning of ribosome-bound tRNAs. This chain is Large ribosomal subunit protein uL5, found in Synechococcus sp. (strain CC9605).